A 1692-amino-acid polypeptide reads, in one-letter code: Regulating synaptic membrane exocytosis protein 1 (1692 aa).

Residues 1–26 (MSSAVGPRGPRPPTVPPPMQELPDLS) form a disordered region. Residues 9-20 (GPRPPTVPPPMQ) show a composition bias toward pro residues. The 161-residue stretch at 22–182 (LPDLSHLTEE…TKSGAWFFGS (161 aa)) folds into the RabBD domain. Residues 110 to 170 (KDDAPTCGIC…VCNLCRKQQE (61 aa)) form an FYVE-type zinc finger. 8 residues coordinate Zn(2+): Cys116, Cys119, Cys132, Cys135, Cys140, Cys143, Cys162, and Cys165. Polar residues predominate over residues 183–199 (GPQQTSQDGTLSDTATG). Residues 183–555 (GPQQTSQDGT…CEDVELESES (373 aa)) are disordered. The segment covering 204–217 (VPREKKARLQERSR) has biased composition (basic and acidic residues). Residues 223–234 (STAAASSQDAAP) show a composition bias toward low complexity. The span at 305 to 357 (VEERERKERRESRRLEKGRSQDYPDTPEKRDEGKAADEEKQRKEEDYQTRYRS) shows a compositional bias: basic and acidic residues. Residues 377–388 (MHARVSRARHER) are compositionally biased toward basic residues. Positions 412–430 (RAPAAARASPPDSPRAYSA) are enriched in low complexity. The segment covering 462–475 (PELKAQEPLRKQSR) has biased composition (basic and acidic residues). Positions 497–509 (RNDSLSSDQSESV) are enriched in polar residues. The residue at position 500 (Ser500) is a Phosphoserine. Residues 515–527 (KPHRSKRGGKKRQ) show a composition bias toward basic residues. A compositionally biased stretch (acidic residues) spans 545-555 (SCEDVELESES). At Ser578 the chain carries Phosphoserine. In terms of domain architecture, PDZ spans 605–691 (RTTMPKDSGA…EPQVEIIVSR (87 aa)). The interval 698-732 (RIPESSHPPLESSSSSFESQKMERPSISVISPTSP) is disordered. Residues 700–716 (PESSHPPLESSSSSFES) show a composition bias toward low complexity. Phosphoserine is present on residues Ser728 and Ser731. The region spanning 742-865 (LPGQLSVKLW…ALLDDEPHWY (124 aa)) is the C2 1 domain. The disordered stretch occupies residues 870-1013 (HDESSLPLPQ…RTRDVDSQYL (144 aa)). Residue Ser881 is modified to Phosphoserine. The segment covering 935-944 (STTLTVPEQQ) has biased composition (polar residues). Ser977 carries the post-translational modification Phosphoserine. Positions 992–1009 (RHHDASRSPVDHRTRDVD) are enriched in basic and acidic residues. Ser1031 is modified (phosphoserine). Disordered stretches follow at residues 1118–1222 (NCLR…EHSS) and 1235–1278 (GGSA…PVRS). 2 stretches are compositionally biased toward basic and acidic residues: residues 1128–1144 (SPER…DRRR) and 1157–1170 (PEND…ERSS). Ser1252 bears the Phosphoserine mark. A compositionally biased stretch (polar residues) spans 1252-1265 (SPTQSPPADTSFSS). Thr1254 is subject to Phosphothreonine. Phosphoserine is present on residues Ser1256, Ser1308, Ser1310, Ser1311, Ser1339, Ser1340, and Ser1342. 3 disordered regions span residues 1332-1394 (CDNV…SGRS), 1408-1428 (LEHN…AGGK), and 1445-1495 (RSRS…GSIN). Over residues 1345–1366 (SDVSAISRTSSASRLSSTSFMS) the composition is skewed to low complexity. Ser1416 is modified (phosphoserine). Residues 1477 to 1490 (EMRKMVRQPSREST) are compositionally biased toward basic and acidic residues. One can recognise a C2 2 domain in the interval 1538–1656 (AMGDIQIGME…DLSSMVIGWY (119 aa)). Phosphoserine is present on residues Ser1677, Ser1680, Ser1683, and Ser1692.

As to quaternary structure, binds RAB3A, RAB3B and RAB3D that have been activated by GTP-binding. Interacts with RAB3C, RAB10, RAB26 and RAB37. Binds UNC13A. Interacts with TSPOAP1 and RIMBP2. Interacts with PPFIA3 and PPFIA4. Interacts with ERC1. Binds SNAP25, SYT1 and CACNA1B. Interaction with SYT1 is enhanced by calcium ions. Interaction with SNAP25 is weaker in the presence of calcium ions. Post-translationally, phosphorylated by BRSK1. In terms of tissue distribution, expressed in melanocytes. Detected in brain and retina.

Its subcellular location is the cell membrane. The protein localises to the synapse. It is found in the presynaptic cell membrane. Its function is as follows. Rab effector involved in exocytosis. May act as scaffold protein that regulates neurotransmitter release at the active zone. Essential for maintaining normal probability of neurotransmitter release and for regulating release during short-term synaptic plasticity. Plays a role in dendrite formation by melanocytes. This chain is Regulating synaptic membrane exocytosis protein 1 (RIMS1), found in Homo sapiens (Human).